Here is a 520-residue protein sequence, read N- to C-terminus: 2-isopropylmalate synthase (520 aa).

A Pyruvate carboxyltransferase domain is found at 12–274; it reads IRIFDTTLRD…DTAINTPRIV (263 aa). 4 residues coordinate Mn(2+): Asp21, His209, His211, and Asn245. Residues 396–520 are regulatory domain; sequence RLASMTISDV…VVAGKTAAVA (125 aa).

Belongs to the alpha-IPM synthase/homocitrate synthase family. LeuA type 1 subfamily. As to quaternary structure, homodimer. Mn(2+) serves as cofactor.

Its subcellular location is the cytoplasm. The catalysed reaction is 3-methyl-2-oxobutanoate + acetyl-CoA + H2O = (2S)-2-isopropylmalate + CoA + H(+). It functions in the pathway amino-acid biosynthesis; L-leucine biosynthesis; L-leucine from 3-methyl-2-oxobutanoate: step 1/4. Functionally, catalyzes the condensation of the acetyl group of acetyl-CoA with 3-methyl-2-oxobutanoate (2-ketoisovalerate) to form 3-carboxy-3-hydroxy-4-methylpentanoate (2-isopropylmalate). In Xanthomonas campestris pv. campestris (strain B100), this protein is 2-isopropylmalate synthase.